Consider the following 320-residue polypeptide: Malate dehydrogenase (320 aa).

NAD(+)-binding positions include 10-15 (GAGNIG) and Asp-34. Positions 83 and 89 each coordinate substrate. NAD(+) contacts are provided by residues Asn-96 and 119–121 (ITN). Residues Asn-121 and Arg-152 each contribute to the substrate site. His-176 functions as the Proton acceptor in the catalytic mechanism.

This sequence belongs to the LDH/MDH superfamily. MDH type 3 family.

The catalysed reaction is (S)-malate + NAD(+) = oxaloacetate + NADH + H(+). In terms of biological role, catalyzes the reversible oxidation of malate to oxaloacetate. This Rhizorhabdus wittichii (strain DSM 6014 / CCUG 31198 / JCM 15750 / NBRC 105917 / EY 4224 / RW1) (Sphingomonas wittichii) protein is Malate dehydrogenase.